The primary structure comprises 358 residues: 3-dehydroquinate synthase (358 aa).

NAD(+) is bound by residues 75–80 (SGEGSK), 109–113 (GVLGD), 133–134 (TT), lysine 146, and lysine 155. Residues glutamate 188, histidine 245, and histidine 262 each contribute to the Zn(2+) site.

The protein belongs to the sugar phosphate cyclases superfamily. Dehydroquinate synthase family. Requires Co(2+) as cofactor. Zn(2+) is required as a cofactor. The cofactor is NAD(+).

It localises to the cytoplasm. It carries out the reaction 7-phospho-2-dehydro-3-deoxy-D-arabino-heptonate = 3-dehydroquinate + phosphate. The protein operates within metabolic intermediate biosynthesis; chorismate biosynthesis; chorismate from D-erythrose 4-phosphate and phosphoenolpyruvate: step 2/7. Functionally, catalyzes the conversion of 3-deoxy-D-arabino-heptulosonate 7-phosphate (DAHP) to dehydroquinate (DHQ). This is 3-dehydroquinate synthase from Methylacidiphilum infernorum (isolate V4) (Methylokorus infernorum (strain V4)).